The chain runs to 1168 residues: ATP-dependent DNA helicase mph1 (1168 aa).

2 stretches are compositionally biased toward polar residues: residues 24–38 (NITS…QLAS) and 59–68 (PTVSQGQATA). The interval 24 to 132 (NITSHHPSNS…PFRADMPPEQ (109 aa)) is disordered. Residues 71-88 (RAKTASKPTTSATTSRPS) are compositionally biased toward low complexity. Positions 89–104 (LAQSSQRKNLRQTTLW) are enriched in polar residues. The 169-residue stretch at 162–330 (IVKNGLFNNT…DVIDNLGISH (169 aa)) folds into the Helicase ATP-binding domain. 175-182 (LPTGLGKT) provides a ligand contact to ATP. Positions 278–281 (DEAH) match the DEAH box motif. Positions 506–665 (LVNHFMDAGE…GSRFTFRHDL (160 aa)) constitute a Helicase C-terminal domain. 2 disordered regions span residues 690 to 717 (SQNP…FNMP) and 830 to 1168 (APAN…DDQE). Residues 701–714 (SAARMRTKPAKKKF) are compositionally biased toward basic residues. A compositionally biased stretch (polar residues) spans 895–907 (TAKTKSTGVSKQT). The span at 920–936 (DCEEGGNEYDGNVDDDE) shows a compositional bias: acidic residues. Residues 941–959 (RNFRSKGRGRGSGRGKKSQ) are compositionally biased toward basic residues. Acidic residues predominate over residues 985 to 996 (GSDDGADLEDFI). A compositionally biased stretch (polar residues) spans 1001–1030 (EVTSSLQHRPRGSTSPTTAPDAGSSSLSSK).

It belongs to the DEAD box helicase family. DEAH subfamily. FANCM sub-subfamily. Interacts with the MHF histone-fold complex to form the FANCM-MHF complex.

Its subcellular location is the nucleus. The enzyme catalyses ATP + H2O = ADP + phosphate + H(+). Functionally, ATP-dependent DNA helicase involved in DNA damage repair by homologous recombination and in genome maintenance. Capable of unwinding D-loops. Plays a role in limiting crossover recombinants during mitotic DNA double-strand break (DSB) repair. Component of a FANCM-MHF complex which promotes gene conversion at blocked replication forks, probably by reversal of the stalled fork. In Neurospora crassa (strain ATCC 24698 / 74-OR23-1A / CBS 708.71 / DSM 1257 / FGSC 987), this protein is ATP-dependent DNA helicase mph1.